The sequence spans 213 residues: High frequency lysogenization protein HflD homolog (213 aa).

Positions 79–126 form a coiled coil; it reads QGLNAELTRYTLSLMVLERKLSSAKGALDTLGNRINGLQRQLEHFDLQ.

The protein belongs to the HflD family.

It is found in the cytoplasm. The protein resides in the cell inner membrane. This Shigella flexneri serotype 5b (strain 8401) protein is High frequency lysogenization protein HflD homolog.